Consider the following 106-residue polypeptide: MIITTTNGIEGKRVVEYKGIVCGEVISGVDFIKDFAAGLTNFFGGRSKSYEGELIEAREGAIREMKERAIQMGANAIIGVDIDYEVLGQGGNMLMVTASGTAVVIE.

The protein belongs to the UPF0145 family.

The protein is UPF0145 protein Cthe_0398 of Acetivibrio thermocellus (strain ATCC 27405 / DSM 1237 / JCM 9322 / NBRC 103400 / NCIMB 10682 / NRRL B-4536 / VPI 7372) (Clostridium thermocellum).